Reading from the N-terminus, the 152-residue chain is NADH-ubiquinone oxidoreductase chain 4 (152 aa).

Helical transmembrane passes span 2–22, 43–63, 84–104, and 128–148; these read FSGATTLMIAHGLTSSMYFCL, ILLPLTAFWWLTASLTNLALP, ITIVLTGLNMLITALYSLHMF, and MLMFMHLAPIILLSLNPNIIL.

The protein belongs to the complex I subunit 4 family.

The protein localises to the mitochondrion membrane. It carries out the reaction a ubiquinone + NADH + 5 H(+)(in) = a ubiquinol + NAD(+) + 4 H(+)(out). Its function is as follows. Core subunit of the mitochondrial membrane respiratory chain NADH dehydrogenase (Complex I) that is believed to belong to the minimal assembly required for catalysis. Complex I functions in the transfer of electrons from NADH to the respiratory chain. The immediate electron acceptor for the enzyme is believed to be ubiquinone. The sequence is that of NADH-ubiquinone oxidoreductase chain 4 (MT-ND4) from Macaca fascicularis (Crab-eating macaque).